Consider the following 737-residue polypeptide: NAD-dependent protein deacetylase sirtuin-1 (737 aa).

Positions 1–28 (MADEVALALQAAGSPSAAAAMEAASQPA) are enriched in low complexity. Disordered stretches follow at residues 1–56 (MADE…AVAP) and 75–125 (EAAG…EAAA). An N-acetylalanine modification is found at A2. Residues 2-131 (ADEVALALQA…EAAAAAAAAA (130 aa)) are interaction with CLOCK. The segment at 2-268 (ADEVALALQA…SCGIPDFRSR (267 aa)) is interaction with H1-4. 2 positions are modified to phosphoserine: S14 and S25. The Nuclear localization signal motif lies at 32 to 39 (LRKRPRRD). S46 is subject to Phosphoserine; by MAPK8. Low complexity-rich tracts occupy residues 46-56 (SPGEPSAAVAP) and 75-94 (EAAG…AVAG). Acidic residues predominate over residues 111–123 (DFDDDEGEEEDEA). An interaction with CCAR2 region spans residues 135–533 (RDNLLLTDGL…LHISEDSSSP (399 aa)). The Nuclear export signal motif lies at 138-145 (LLLTDGLL). Phosphoserine occurs at positions 151, 154, 164, and 165. A disordered region spans residues 152-171 (CESDDDDRTSHASSSDWTPR). The Nuclear localization signal signature appears at 223–230 (PPKRKKRK). The 261-residue stretch at 228–488 (KRKDINTIED…NELCHRLGGE (261 aa)) folds into the Deacetylase sirtuin-type domain. K230 bears the N6-acetyllysine mark. The required for interaction with the sumoylated form of CCAR2 stretch occupies residues 248 to 251 (IIVL). Residues 253–272 (GAGV…DGIY) and 337–340 (QNID) contribute to the NAD(+) site. Catalysis depends on H355, which acts as the Proton acceptor. Zn(2+) contacts are provided by C363 and C366. Position 369 is an N6-acetyllysine (K369). Zn(2+) contacts are provided by C387 and C390. S-nitrosocysteine occurs at positions 387 and 390. K422 carries the post-translational modification N6-acetyllysine. Residues 425–431 (VDLLIVI) carry the Nuclear export signal motif. NAD(+) contacts are provided by residues 432–434 (GSS), 457–459 (NRE), and C474. Residue K505 is modified to N6-acetyllysine. Positions 514–539 (VHLSELPPTPLHISEDSSSPERTVPQ) are disordered. T522 is subject to Phosphothreonine; by DYRK1A, DYRK3 and MAPK8. At S527 the chain carries Phosphoserine. The span at 529–539 (DSSSPERTVPQ) shows a compositional bias: polar residues. Position 536 is a phosphothreonine (T536). Residue K600 is modified to N6-acetyllysine. Phosphoserine; by CaMK2 occurs at positions 649 and 651. The disordered stretch occupies residues 653 to 713 (DDVLSSSSCG…GSGFGADGGD (61 aa)). The segment covering 656–676 (LSSSSCGSNSDSGTCQSPSLE) has biased composition (low complexity). The segment covering 677–697 (EPLEDESEIEEFYNGLEDDTE) has biased composition (acidic residues). S737 bears the Phosphoserine mark.

Belongs to the sirtuin family. Class I subfamily. As to quaternary structure, interacts with XBP1 isoform 2. Found in a complex with PCAF and MYOD1 Component of the eNoSC complex, composed of SIRT1, SUV39H1 and RRP8. Interacts with HES1, HEY2 and PML. Interacts with RPS19BP1/AROS. Interacts with CCAR2 (via N-terminus); the interaction disrupts the interaction between SIRT1 and p53/TP53. Interacts with SETD7; the interaction induces the dissociation of SIRT1 from p53/TP53 and increases p53/TP53 activity. Interacts with MYCN, NR1I2, CREBZF, TSC2, TLE1, FOS, JUN, NR0B2, PPARG, NCOR, IRS1, IRS2 and NMNAT1. Interacts with HNF1A; the interaction occurs under nutrient restriction. Interacts with SUZ12; the interaction mediates the association with the PRC4 histone methylation complex which is specific as an association with PCR2 and PCR3 complex variants is not found. Interacts with FOXO1; the interaction deacetylates FOXO1, enhances its DNA-binding ability and increases its transcriptional activity. Interacts with BCL6; leads to a epigenetic repression of specific target genes. Interacts with CLOCK, BMAL1 and PER2. Interacts with PPARA; the interaction seems to be modulated by NAD(+) levels. Interacts with NR1H3 and this interaction is inhibited in the presence of CCAR2. Interacts with CHEK2 and p53/TP53. Exhibits a preferential interaction with sumoylated CCAR2 over its unmodified form. Interacts with PACS2. Interacts with SIRT7. Interacts with PUS7. Interacts with TULP3. Interacts with MORN3; the interaction enhances the ubiquitination of p53/TP53. Requires Zn(2+) as cofactor. In terms of processing, methylated on multiple lysine residues; methylation is enhanced after DNA damage and is dispensable for deacetylase activity toward p53/TP53. Post-translationally, phosphorylated. Phosphorylated by STK4/MST1, resulting in inhibition of SIRT1-mediated p53/TP53 deacetylation. Phosphorylation by MAPK8/JNK1 at Ser-46 and Thr-522 leads to increased nuclear localization and enzymatic activity. Phosphorylation at Thr-522 by DYRK1A and DYRK3 activates deacetylase activity and promotes cell survival. Phosphorylation by mammalian target of rapamycin complex 1 (mTORC1) at Ser-46 inhibits deacetylation activity. Phosphorylated by CaMK2, leading to increased p53/TP53 and NF-kappa-B p65/RELA deacetylation activity. Proteolytically cleaved by cathepsin B upon TNF-alpha treatment to yield catalytic inactive but stable SirtT1 75 kDa fragment (75SirT1). In terms of processing, S-nitrosylated by GAPDH, leading to inhibit the NAD-dependent protein deacetylase activity. Post-translationally, acetylated at various Lys residues. Deacetylated via an autocatalytic mechanism. Autodeacetylation at Lys-230 promotes its protein deacetylase activity. Ubiquitinated; leading to degradation. Deubiquitinated by USP22; leading to stabilization. Widely expressed. Weakly expressed in liver and skeletal muscle.

The protein localises to the nucleus. It is found in the PML body. Its subcellular location is the cytoplasm. It localises to the mitochondrion. It carries out the reaction N(6)-acetyl-L-lysyl-[protein] + NAD(+) + H2O = 2''-O-acetyl-ADP-D-ribose + nicotinamide + L-lysyl-[protein]. It catalyses the reaction N(6)-propanoyl-L-lysyl-[protein] + NAD(+) + H2O = 3''-O-propanoyl-ADP-D-ribose + nicotinamide + L-lysyl-[protein]. The catalysed reaction is N(6)-(2E)-butenoyl-L-lysyl-[protein] + NAD(+) + H2O = 2''-O-(2E)-but-2-enoyl-ADP-D-ribose + nicotinamide + L-lysyl-[protein]. The enzyme catalyses N(6)-[(S)-lactoyl]-L-lysyl-[protein] + NAD(+) + H2O = 2''-O-(S)-lactoyl-ADP-D-ribose + nicotinamide + L-lysyl-[protein]. Activated by resveratrol (3,5,4'-trihydroxy-trans-stilbene), butein (3,4,2',4'-tetrahydroxychalcone), piceatannol (3,5,3',4'-tetrahydroxy-trans-stilbene), Isoliquiritigenin (4,2',4'-trihydroxychalcone), fisetin (3,7,3',4'-tetrahydroxyflavone) and quercetin (3,5,7,3',4'-pentahydroxyflavone). MAPK8/JNK1 and RPS19BP1/AROS act as positive regulators of deacetylation activity. Inhibited by nicotinamide. Negatively regulated by CCAR2. Its function is as follows. NAD-dependent protein deacetylase that links transcriptional regulation directly to intracellular energetics and participates in the coordination of several separated cellular functions such as cell cycle, response to DNA damage, metabolism, apoptosis and autophagy. Can modulate chromatin function through deacetylation of histones and can promote alterations in the methylation of histones and DNA, leading to transcriptional repression. Deacetylates a broad range of transcription factors and coregulators, thereby regulating target gene expression positively and negatively. Serves as a sensor of the cytosolic ratio of NAD(+)/NADH which is altered by glucose deprivation and metabolic changes associated with caloric restriction. Is essential in skeletal muscle cell differentiation and in response to low nutrients mediates the inhibitory effect on skeletal myoblast differentiation which also involves 5'-AMP-activated protein kinase (AMPK) and nicotinamide phosphoribosyltransferase (NAMPT). Component of the eNoSC (energy-dependent nucleolar silencing) complex, a complex that mediates silencing of rDNA in response to intracellular energy status and acts by recruiting histone-modifying enzymes. The eNoSC complex is able to sense the energy status of cell: upon glucose starvation, elevation of NAD(+)/NADP(+) ratio activates SIRT1, leading to histone H3 deacetylation followed by dimethylation of H3 at 'Lys-9' (H3K9me2) by SUV39H1 and the formation of silent chromatin in the rDNA locus. Deacetylates 'Lys-266' of SUV39H1, leading to its activation. Inhibits skeletal muscle differentiation by deacetylating PCAF and MYOD1. Deacetylates H2A and 'Lys-26' of H1-4. Deacetylates 'Lys-16' of histone H4 (in vitro). Involved in NR0B2/SHP corepression function through chromatin remodeling: Recruited to LRH1 target gene promoters by NR0B2/SHP thereby stimulating histone H3 and H4 deacetylation leading to transcriptional repression. Proposed to contribute to genomic integrity via positive regulation of telomere length; however, reports on localization to pericentromeric heterochromatin are conflicting. Proposed to play a role in constitutive heterochromatin (CH) formation and/or maintenance through regulation of the available pool of nuclear SUV39H1. Upon oxidative/metabolic stress decreases SUV39H1 degradation by inhibiting SUV39H1 polyubiquitination by MDM2. This increase in SUV39H1 levels enhances SUV39H1 turnover in CH, which in turn seems to accelerate renewal of the heterochromatin which correlates with greater genomic integrity during stress response. Deacetylates 'Lys-382' of p53/TP53 and impairs its ability to induce transcription-dependent proapoptotic program and modulate cell senescence. Deacetylates TAF1B and thereby represses rDNA transcription by the RNA polymerase I. Deacetylates MYC, promotes the association of MYC with MAX and decreases MYC stability leading to compromised transformational capability. Deacetylates FOXO3 in response to oxidative stress thereby increasing its ability to induce cell cycle arrest and resistance to oxidative stress but inhibiting FOXO3-mediated induction of apoptosis transcriptional activity; also leading to FOXO3 ubiquitination and protesomal degradation. Appears to have a similar effect on MLLT7/FOXO4 in regulation of transcriptional activity and apoptosis. Deacetylates DNMT1; thereby impairs DNMT1 methyltransferase-independent transcription repressor activity, modulates DNMT1 cell cycle regulatory function and DNMT1-mediated gene silencing. Deacetylates RELA/NF-kappa-B p65 thereby inhibiting its transactivating potential and augments apoptosis in response to TNF-alpha. Deacetylates HIF1A, KAT5/TIP60, RB1 and HIC1. Deacetylates FOXO1, which increases its DNA binding ability and enhances its transcriptional activity leading to increased gluconeogenesis in liver. Inhibits E2F1 transcriptional activity and apoptotic function, possibly by deacetylation. Involved in HES1- and HEY2-mediated transcriptional repression. In cooperation with MYCN seems to be involved in transcriptional repression of DUSP6/MAPK3 leading to MYCN stabilization by phosphorylation at 'Ser-62'. Deacetylates MEF2D. Required for antagonist-mediated transcription suppression of AR-dependent genes which may be linked to local deacetylation of histone H3. Represses HNF1A-mediated transcription. Required for the repression of ESRRG by CREBZF. Deacetylates NR1H3 and NR1H2 and deacetylation of NR1H3 at 'Lys-434' positively regulates transcription of NR1H3:RXR target genes, promotes NR1H3 proteasomal degradation and results in cholesterol efflux; a promoter clearing mechanism after reach round of transcription is proposed. Involved in lipid metabolism: deacetylates LPIN1, thereby inhibiting diacylglycerol synthesis. Implicated in regulation of adipogenesis and fat mobilization in white adipocytes by repression of PPARG which probably involves association with NCOR1 and SMRT/NCOR2. Deacetylates p300/EP300 and PRMT1. Deacetylates ACSS2 leading to its activation, and HMGCS1 deacetylation. Involved in liver and muscle metabolism. Through deacetylation and activation of PPARGC1A is required to activate fatty acid oxidation in skeletal muscle under low-glucose conditions and is involved in glucose homeostasis. Involved in regulation of PPARA and fatty acid beta-oxidation in liver. Involved in positive regulation of insulin secretion in pancreatic beta cells in response to glucose; the function seems to imply transcriptional repression of UCP2. Proposed to deacetylate IRS2 thereby facilitating its insulin-induced tyrosine phosphorylation. Deacetylates SREBF1 isoform SREBP-1C thereby decreasing its stability and transactivation in lipogenic gene expression. Involved in DNA damage response by repressing genes which are involved in DNA repair, such as XPC and TP73, deacetylating XRCC6/Ku70, and facilitating recruitment of additional factors to sites of damaged DNA, such as SIRT1-deacetylated NBN can recruit ATM to initiate DNA repair and SIRT1-deacetylated XPA interacts with RPA2. Also involved in DNA repair of DNA double-strand breaks by homologous recombination and specifically single-strand annealing independently of XRCC6/Ku70 and NBN. Promotes DNA double-strand breaks by mediating deacetylation of SIRT6. Transcriptional suppression of XPC probably involves an E2F4:RBL2 suppressor complex and protein kinase B (AKT) signaling. Transcriptional suppression of TP73 probably involves E2F4 and PCAF. Deacetylates WRN thereby regulating its helicase and exonuclease activities and regulates WRN nuclear translocation in response to DNA damage. Deacetylates APEX1 at 'Lys-6' and 'Lys-7' and stimulates cellular AP endonuclease activity by promoting the association of APEX1 to XRCC1. Catalyzes deacetylation of ERCC4/XPF, thereby impairing interaction with ERCC1 and nucleotide excision repair (NER). Increases p53/TP53-mediated transcription-independent apoptosis by blocking nuclear translocation of cytoplasmic p53/TP53 and probably redirecting it to mitochondria. Deacetylates XRCC6/Ku70 at 'Lys-537' and 'Lys-540' causing it to sequester BAX away from mitochondria thereby inhibiting stress-induced apoptosis. Is involved in autophagy, presumably by deacetylating ATG5, ATG7 and MAP1LC3B/ATG8. Deacetylates AKT1 which leads to enhanced binding of AKT1 and PDK1 to PIP3 and promotes their activation. Proposed to play role in regulation of STK11/LBK1-dependent AMPK signaling pathways implicated in cellular senescence which seems to involve the regulation of the acetylation status of STK11/LBK1. Can deacetylate STK11/LBK1 and thereby increase its activity, cytoplasmic localization and association with STRAD; however, the relevance of such activity in normal cells is unclear. In endothelial cells is shown to inhibit STK11/LBK1 activity and to promote its degradation. Deacetylates SMAD7 at 'Lys-64' and 'Lys-70' thereby promoting its degradation. Deacetylates CIITA and augments its MHC class II transactivation and contributes to its stability. Deacetylates MECOM/EVI1. Deacetylates PML at 'Lys-487' and this deacetylation promotes PML control of PER2 nuclear localization. During the neurogenic transition, represses selective NOTCH1-target genes through histone deacetylation in a BCL6-dependent manner and leading to neuronal differentiation. Regulates the circadian expression of several core clock genes, including BMAL1, RORC, PER2 and CRY1 and plays a critical role in maintaining a controlled rhythmicity in histone acetylation, thereby contributing to circadian chromatin remodeling. Deacetylates BMAL1 and histones at the circadian gene promoters in order to facilitate repression by inhibitory components of the circadian oscillator. Deacetylates PER2, facilitating its ubiquitination and degradation by the proteasome. Protects cardiomyocytes against palmitate-induced apoptosis. Deacetylates XBP1 isoform 2; deacetylation decreases protein stability of XBP1 isoform 2 and inhibits its transcriptional activity. Deacetylates PCK1 and directs its activity toward phosphoenolpyruvate production promoting gluconeogenesis. Involved in the CCAR2-mediated regulation of PCK1 and NR1D1. Deacetylates CTNB1 at 'Lys-49'. In POMC (pro-opiomelanocortin) neurons, required for leptin-induced activation of PI3K signaling. Deacetylates SOX9; promoting SOX9 nuclear localization and transactivation activity. Involved in the regulation of centrosome duplication: Deacetylates CENATAC in G1 phase, allowing for SASS6 accumulation on the centrosome and subsequent procentriole assembly. Deacetylates NDC80/HEC1. In addition to protein deacetylase activity, also acts as a protein-lysine deacylase by mediating protein delactylation, depropionylation and decrotonylation. Mediates depropionylation of Osterix (SP7). Catalyzes decrotonylation of histones; it however does not represent a major histone decrotonylase. Mediates protein delactylation of TEAD1 and YAP1. Functionally, deacetylates 'Lys-382' of p53/TP53, however with lower activity than isoform 1. In combination, the two isoforms exert an additive effect. Isoform 2 regulates p53/TP53 expression and cellular stress response and is in turn repressed by p53/TP53 presenting a SIRT1 isoform-dependent auto-regulatory loop. In terms of biological role, catalytically inactive 75SirT1 may be involved in regulation of apoptosis. May be involved in protecting chondrocytes from apoptotic death by associating with cytochrome C and interfering with apoptosome assembly. In Mus musculus (Mouse), this protein is NAD-dependent protein deacetylase sirtuin-1 (Sirt1).